The sequence spans 398 residues: MNIHEYQAKRLLHEYGAPVANGVAVYSVEQAEKWAKKLPGPLYVVKSQIHAGGRGKGNFKELDSDAKGGVRLAKSVEEVVANVKEMLGKTLVTKQTGPEGKQVNRLYIEDGANIERELYLSLLIDRTTGRVAFVVSTEGGMDIETVAAETPEKICTLSIDPAEGVTDADCVKLCDELNLSGNAREDGEKLFPILYKAFCEKDMSLLEINPLIVMDDGRLRVLDAKVSFDNNALFRHPDILGLRDISEEDPKEIEASKHDLAYIALDGMIGCMVNGAGLAMATMDIIKLYGAEPANFLDVGGGASKEKVTHAFKIITADPNVKGILVNIFGGIMRCDVIAEGVIAAVKEVGLKVPLVVRLEGTNVEQGKAIINDSGLNVISANDLDDAAQKIVAAVKGA.

Positions 9–254 constitute an ATP-grasp domain; sequence KRLLHEYGAP…ISEEDPKEIE (246 aa). ATP-binding positions include lysine 46, 53–55, glutamate 109, alanine 112, and glutamate 117; that span reads GRG. Residues asparagine 209 and aspartate 223 each contribute to the Mg(2+) site. Residues asparagine 274 and 331-333 each bind substrate; that span reads GIM.

Belongs to the succinate/malate CoA ligase beta subunit family. As to quaternary structure, heterotetramer of two alpha and two beta subunits. Mg(2+) serves as cofactor.

The catalysed reaction is succinate + ATP + CoA = succinyl-CoA + ADP + phosphate. The enzyme catalyses GTP + succinate + CoA = succinyl-CoA + GDP + phosphate. It participates in carbohydrate metabolism; tricarboxylic acid cycle; succinate from succinyl-CoA (ligase route): step 1/1. Its function is as follows. Succinyl-CoA synthetase functions in the citric acid cycle (TCA), coupling the hydrolysis of succinyl-CoA to the synthesis of either ATP or GTP and thus represents the only step of substrate-level phosphorylation in the TCA. The beta subunit provides nucleotide specificity of the enzyme and binds the substrate succinate, while the binding sites for coenzyme A and phosphate are found in the alpha subunit. This is Succinate--CoA ligase [ADP-forming] subunit beta from Bartonella bacilliformis (strain ATCC 35685 / KC583 / Herrer 020/F12,63).